The chain runs to 130 residues: Large ribosomal subunit protein bL21 (130 aa).

Residues 103–130 form a disordered region; that stretch reads AGGKTSKAEPRKTRKAEPAAESAPAAAE. Basic and acidic residues predominate over residues 108-120; it reads SKAEPRKTRKAEP. Low complexity predominate over residues 121–130; that stretch reads AAESAPAAAE.

The protein belongs to the bacterial ribosomal protein bL21 family. In terms of assembly, part of the 50S ribosomal subunit. Contacts protein L20.

This protein binds to 23S rRNA in the presence of protein L20. This chain is Large ribosomal subunit protein bL21, found in Methylorubrum extorquens (strain CM4 / NCIMB 13688) (Methylobacterium extorquens).